The following is a 115-amino-acid chain: NAD(P)H-quinone oxidoreductase subunit M (115 aa).

This sequence belongs to the complex I NdhM subunit family. NDH-1 can be composed of about 15 different subunits; different subcomplexes with different compositions have been identified which probably have different functions.

The protein localises to the cellular thylakoid membrane. The enzyme catalyses a plastoquinone + NADH + (n+1) H(+)(in) = a plastoquinol + NAD(+) + n H(+)(out). It catalyses the reaction a plastoquinone + NADPH + (n+1) H(+)(in) = a plastoquinol + NADP(+) + n H(+)(out). Functionally, NDH-1 shuttles electrons from an unknown electron donor, via FMN and iron-sulfur (Fe-S) centers, to quinones in the respiratory and/or the photosynthetic chain. The immediate electron acceptor for the enzyme in this species is believed to be plastoquinone. Couples the redox reaction to proton translocation, and thus conserves the redox energy in a proton gradient. Cyanobacterial NDH-1 also plays a role in inorganic carbon-concentration. The sequence is that of NAD(P)H-quinone oxidoreductase subunit M from Prochlorococcus marinus (strain MIT 9313).